A 962-amino-acid polypeptide reads, in one-letter code: Phagocyte signaling-impaired protein (962 aa).

3 TPR repeats span residues 45–78, 79–112, and 523–560; these read LCAR…KPTD, DSTL…NPGN, and QIQL…FTNS. A disordered region spans residues 856-880; that stretch reads TKVKKKQGDNKTQDTPQPVSEKERS.

The protein belongs to the MDM20/NAA25 family. Component of the N-terminal acetyltransferase B (NatB) complex.

Its subcellular location is the lysosome. Functionally, non-catalytic subunit of the NatB complex which catalyzes acetylation of the N-terminal methionine residues of proteins beginning with Met-Asp or Met-Glu. Has 2 roles in the larval immune response: required both for the phagocytic degradation of internalized bacteria and for the induction of Defensin in the fat body. Within the phagocytic blood cells, has a role in detection of infection and activation of the humoral immune response. This is Phagocyte signaling-impaired protein from Drosophila pseudoobscura pseudoobscura (Fruit fly).